Consider the following 131-residue polypeptide: MRFGETDAAGVLHFQQLLRWCHEAYEESLERFGLEPATLFPTPGQQLNLLLPITHCSADFLAPLICGDPLAIALTPQWLDPTAFEVAYSFSSAGRPVARGLTRHQCIAAADRRRAPLPEGVQRWLQASVQT.

Asp7 is a catalytic residue.

It belongs to the 4-hydroxybenzoyl-CoA thioesterase family. DHNA-CoA hydrolase subfamily.

It carries out the reaction 1,4-dihydroxy-2-naphthoyl-CoA + H2O = 1,4-dihydroxy-2-naphthoate + CoA + H(+). It functions in the pathway cofactor biosynthesis; phylloquinone biosynthesis. It participates in quinol/quinone metabolism; 1,4-dihydroxy-2-naphthoate biosynthesis; 1,4-dihydroxy-2-naphthoate from chorismate: step 7/7. In terms of biological role, catalyzes the hydrolysis of 1,4-dihydroxy-2-naphthoyl-CoA (DHNA-CoA) to 1,4-dihydroxy-2-naphthoate (DHNA), a reaction involved in phylloquinone (vitamin K1) biosynthesis. This is 1,4-dihydroxy-2-naphthoyl-CoA hydrolase from Synechococcus sp. (strain RCC307).